Consider the following 918-residue polypeptide: Cell surface glycoprotein 1 (918 aa).

The first 34 residues, Met1–Ala34, serve as a signal peptide directing secretion. N-linked (GlcNAc...) asparagine glycosylation is found at Asn37, Asn56, Asn110, Asn219, Asn250, Asn261, and Asn291. The N-linked (GalNAc...) asparagine glycan is linked to Asn306. N-linked (GlcNAc...) asparagine glycans are attached at residues Asn318, Asn343, Asn392, Asn434, Asn487, Asn541, Asn555, Asn572, Asn585, Asn614, Asn715, Asn776, Asn836, and Asn845. The tract at residues His815 to Gly894 is disordered. Residues Tyr833–Val846 show a composition bias toward polar residues. Acidic residues predominate over residues Val849–Asp875. A helical transmembrane segment spans residues Gly894 to Val914. The short motif at Pro895–Phe897 is the PGF sorting signal element.

The protein belongs to the halobacterial S-layer protein family. Post-translationally, N-glycosylated on Asn-306; this N-linked glycan is a branched trisaccharide containing 2-amino-6-sulfo-2,6-dideoxy-glucose (sulfoquinovosamine). In terms of processing, cleaved by the archaeosortase ArtA at the C-terminus, with removal of a short hydrophobic segment. Lipidation.

It is found in the secreted. The protein resides in the cell wall. It localises to the S-layer. The protein localises to the cell membrane. In terms of biological role, S-layer protein. The S-layer is a paracrystalline mono-layered assembly of proteins which coat the surface of the cell. In H.hispanica, the S-layer contains two different glycoproteins, Slg1 and Slg2, which share highly similar amino acid sequences. The chain is Cell surface glycoprotein 1 from Haloarcula hispanica (strain ATCC 33960 / DSM 4426 / JCM 8911 / NBRC 102182 / NCIMB 2187 / VKM B-1755).